The following is a 539-amino-acid chain: Glucans biosynthesis protein D (539 aa).

Positions 1–29 (MNRRNLLKASMALAAYGSVSASGLFAARA) form a signal peptide, tat-type signal.

The protein belongs to the OpgD/OpgG family. In terms of processing, predicted to be exported by the Tat system. The position of the signal peptide cleavage has not been experimentally proven.

Its subcellular location is the periplasm. The protein operates within glycan metabolism; osmoregulated periplasmic glucan (OPG) biosynthesis. Functionally, probably involved in the control of the structural glucose backbone of osmoregulated periplasmic glucans (OPGs). The chain is Glucans biosynthesis protein D from Pseudomonas syringae pv. syringae (strain B728a).